The chain runs to 369 residues: Aminomethyltransferase (369 aa).

The protein belongs to the GcvT family. In terms of assembly, the glycine cleavage system is composed of four proteins: P, T, L and H.

The enzyme catalyses N(6)-[(R)-S(8)-aminomethyldihydrolipoyl]-L-lysyl-[protein] + (6S)-5,6,7,8-tetrahydrofolate = N(6)-[(R)-dihydrolipoyl]-L-lysyl-[protein] + (6R)-5,10-methylene-5,6,7,8-tetrahydrofolate + NH4(+). The glycine cleavage system catalyzes the degradation of glycine. This chain is Aminomethyltransferase, found in Xanthomonas oryzae pv. oryzae (strain PXO99A).